A 709-amino-acid polypeptide reads, in one-letter code: Phosphoribosylformylglycinamidine synthase subunit PurL (709 aa).

Residue His-36 is part of the active site. Residues Tyr-39 and Lys-80 each contribute to the ATP site. Glu-82 is a Mg(2+) binding site. Residues 83–86 (SHNH) and Arg-105 contribute to the substrate site. Catalysis depends on His-84, which acts as the Proton acceptor. Position 106 (Asp-106) interacts with Mg(2+). Gln-226 serves as a coordination point for substrate. Asp-252 is a binding site for Mg(2+). 294–296 (ETQ) contributes to the substrate binding site. ATP contacts are provided by Asp-470 and Gly-507. Ser-510 is a substrate binding site.

The protein belongs to the FGAMS family. As to quaternary structure, monomer. Part of the FGAM synthase complex composed of 1 PurL, 1 PurQ and 2 PurS subunits.

It localises to the cytoplasm. It catalyses the reaction N(2)-formyl-N(1)-(5-phospho-beta-D-ribosyl)glycinamide + L-glutamine + ATP + H2O = 2-formamido-N(1)-(5-O-phospho-beta-D-ribosyl)acetamidine + L-glutamate + ADP + phosphate + H(+). Its pathway is purine metabolism; IMP biosynthesis via de novo pathway; 5-amino-1-(5-phospho-D-ribosyl)imidazole from N(2)-formyl-N(1)-(5-phospho-D-ribosyl)glycinamide: step 1/2. In terms of biological role, part of the phosphoribosylformylglycinamidine synthase complex involved in the purines biosynthetic pathway. Catalyzes the ATP-dependent conversion of formylglycinamide ribonucleotide (FGAR) and glutamine to yield formylglycinamidine ribonucleotide (FGAM) and glutamate. The FGAM synthase complex is composed of three subunits. PurQ produces an ammonia molecule by converting glutamine to glutamate. PurL transfers the ammonia molecule to FGAR to form FGAM in an ATP-dependent manner. PurS interacts with PurQ and PurL and is thought to assist in the transfer of the ammonia molecule from PurQ to PurL. This Saccharolobus islandicus (strain M.16.4 / Kamchatka #3) (Sulfolobus islandicus) protein is Phosphoribosylformylglycinamidine synthase subunit PurL.